The primary structure comprises 593 residues: UvrABC system protein C (593 aa).

The GIY-YIG domain occupies 17–94 (MEPGCYLMKD…IKQYQPRYNI (78 aa)). The UVR domain maps to 199-234 (KTILKSLEERMLTASESLDFERAKEYRDLIQHIQNL).

Belongs to the UvrC family. In terms of assembly, interacts with UvrB in an incision complex.

It is found in the cytoplasm. Its function is as follows. The UvrABC repair system catalyzes the recognition and processing of DNA lesions. UvrC both incises the 5' and 3' sides of the lesion. The N-terminal half is responsible for the 3' incision and the C-terminal half is responsible for the 5' incision. The protein is UvrABC system protein C of Staphylococcus aureus (strain USA300).